A 69-amino-acid polypeptide reads, in one-letter code: Photosystem I reaction center subunit IV (69 aa).

It belongs to the PsaE family.

Its subcellular location is the cellular thylakoid membrane. Functionally, stabilizes the interaction between PsaC and the PSI core, assists the docking of the ferredoxin to PSI and interacts with ferredoxin-NADP oxidoreductase. The chain is Photosystem I reaction center subunit IV from Prochlorococcus marinus (strain MIT 9215).